A 270-amino-acid chain; its full sequence is MVRKILQKYGIRGGCHDQHFLIDERSLDSIVDQAELSEKDVVLEIGGGIGNLTERLLEKAGKVYVIELDPALVHVLKDRFSDNEKLEIIPGDVLKLDLPKFNKVVANLPYSISSPITFKLFKHEFELGILMYQYEFAQRMVAKANTENYSRLSVNTHYFADADIIMKIPPSAFSPPPEVWSAVVKVVPRPSSFHTEDPQFFLDLVTAVFLQRRKKLRNAIVKGNHLLNVPNIKQIVAELPEEFMSKRAENLEPHELAEIANFIFKMRSTS.

Residues His-19, Leu-21, Gly-46, Glu-67, Asp-92, and Asn-107 each contribute to the S-adenosyl-L-methionine site.

Belongs to the class I-like SAM-binding methyltransferase superfamily. rRNA adenine N(6)-methyltransferase family. RsmA subfamily.

The protein resides in the cytoplasm. Its function is as follows. Specifically dimethylates two adjacent adenosines in the loop of a conserved hairpin near the 3'-end of 16S rRNA in the 30S particle. May play a critical role in biogenesis of 30S subunits. The sequence is that of Probable ribosomal RNA small subunit methyltransferase A from Methanococcoides burtonii (strain DSM 6242 / NBRC 107633 / OCM 468 / ACE-M).